The primary structure comprises 306 residues: 2-phospho-L-lactate transferase (306 aa).

Residue aspartate 48 coordinates 7,8-didemethyl-8-hydroxy-5-deazariboflavin.

It belongs to the CofD family. In terms of assembly, homodimer. Requires Mg(2+) as cofactor.

The catalysed reaction is (2S)-lactyl-2-diphospho-5'-guanosine + 7,8-didemethyl-8-hydroxy-5-deazariboflavin = oxidized coenzyme F420-0 + GMP + H(+). It participates in cofactor biosynthesis; coenzyme F420 biosynthesis. In terms of biological role, catalyzes the transfer of the 2-phospholactate moiety from (2S)-lactyl-2-diphospho-5'-guanosine to 7,8-didemethyl-8-hydroxy-5-deazariboflavin (FO) with the formation of oxidized coenzyme F420-0 and GMP. The protein is 2-phospho-L-lactate transferase of Methanococcoides burtonii (strain DSM 6242 / NBRC 107633 / OCM 468 / ACE-M).